A 216-amino-acid chain; its full sequence is uncharacterized protein (216 aa).

A disordered region spans residues 55–216 (NEDKAEAMSN…NEKEKDVNPK (162 aa)). 3 stretches are compositionally biased toward basic and acidic residues: residues 134–152 (LTEK…DNHV), 177–187 (KINDKSDDTLH), and 207–216 (NEKEKDVNPK).

This is an uncharacterized protein from Caenorhabditis elegans.